Here is a 149-residue protein sequence, read N- to C-terminus: D-aminoacyl-tRNA deacylase (149 aa).

A Gly-cisPro motif, important for rejection of L-amino acids motif is present at residues 137 to 138 (GP).

Belongs to the DTD family. Homodimer.

The protein localises to the cytoplasm. It catalyses the reaction glycyl-tRNA(Ala) + H2O = tRNA(Ala) + glycine + H(+). The catalysed reaction is a D-aminoacyl-tRNA + H2O = a tRNA + a D-alpha-amino acid + H(+). Functionally, an aminoacyl-tRNA editing enzyme that deacylates mischarged D-aminoacyl-tRNAs. Also deacylates mischarged glycyl-tRNA(Ala), protecting cells against glycine mischarging by AlaRS. Acts via tRNA-based rather than protein-based catalysis; rejects L-amino acids rather than detecting D-amino acids in the active site. By recycling D-aminoacyl-tRNA to D-amino acids and free tRNA molecules, this enzyme counteracts the toxicity associated with the formation of D-aminoacyl-tRNA entities in vivo and helps enforce protein L-homochirality. This Desulforudis audaxviator (strain MP104C) protein is D-aminoacyl-tRNA deacylase.